Reading from the N-terminus, the 955-residue chain is Isoleucine--tRNA ligase (955 aa).

A 'HIGH' region motif is present at residues 60 to 70 (PYANGDLHIGH). E563 contacts L-isoleucyl-5'-AMP. A 'KMSKS' region motif is present at residues 604–608 (KMSKS). K607 contacts ATP. Residues C926, C929, C946, and C949 each contribute to the Zn(2+) site.

It belongs to the class-I aminoacyl-tRNA synthetase family. IleS type 1 subfamily. Monomer. The cofactor is Zn(2+).

Its subcellular location is the cytoplasm. The enzyme catalyses tRNA(Ile) + L-isoleucine + ATP = L-isoleucyl-tRNA(Ile) + AMP + diphosphate. Functionally, catalyzes the attachment of isoleucine to tRNA(Ile). As IleRS can inadvertently accommodate and process structurally similar amino acids such as valine, to avoid such errors it has two additional distinct tRNA(Ile)-dependent editing activities. One activity is designated as 'pretransfer' editing and involves the hydrolysis of activated Val-AMP. The other activity is designated 'posttransfer' editing and involves deacylation of mischarged Val-tRNA(Ile). This chain is Isoleucine--tRNA ligase, found in Cyanothece sp. (strain PCC 7425 / ATCC 29141).